Consider the following 412-residue polypeptide: NF-kappa-B essential modulator (412 aa).

Residues Met1 to Pro48 form a disordered region. A required for interaction with and ubiquitination by MARCHF2 region spans residues Met1 to Val197. 2 positions are modified to phosphoserine; by IKKB: Ser31 and Ser43. The tract at residues Glu44–Lys111 is interaction with CHUK/IKBKB. Residues Glu49 to Arg345 adopt a coiled-coil conformation. At Ser68 the chain carries Phosphoserine. Ser85 is subject to Phosphoserine; by ATM. Residues Lys111, Lys139, Lys143, Lys226, and Lys246 each participate in a glycyl lysine isopeptide (Lys-Gly) (interchain with G-Cter in ubiquitin) cross-link. Residues Leu150 to Gly250 form an interaction with TANK region. The tract at residues Asp242–Ser343 is ubiquitin-binding (UBAN). Residues Lys246–Gln358 are self-association. The tract at residues Lys249–Glu412 is required for interaction with TNFAIP3. The linear polyubiquitin-binding, does not bind to 'Lys-63'-linked polyubiquitin stretch occupies residues Gly250 to Gly339. Residue Lys270 forms a Glycyl lysine isopeptide (Lys-Gly) (interchain with G-Cter in SUMO); alternate linkage. A Glycyl lysine isopeptide (Lys-Gly) (interchain with G-Cter in ubiquitin); alternate cross-link involves residue Lys270. Residues Lys276, Lys278, Lys285, and Lys295 each participate in a glycyl lysine isopeptide (Lys-Gly) (interchain with G-Cter in ubiquitin) cross-link. A Glycyl lysine isopeptide (Lys-Gly) (interchain with G-Cter in SUMO); alternate cross-link involves residue Lys302. Lys302 is covalently cross-linked (Glycyl lysine isopeptide (Lys-Gly) (interchain with G-Cter in ubiquitin); alternate). Glycyl lysine isopeptide (Lys-Gly) (interchain with G-Cter in ubiquitin) cross-links involve residues Lys314, Lys318, and Lys319. The interval Leu315–Leu336 is leucine-zipper. Ser369 bears the Phosphoserine; by IKKB mark. The segment at Ser375 to Glu412 is interaction with CYLD. A Phosphoserine modification is found at Ser380. The segment at Pro382–Glu412 adopts a CCHC NOA-type zinc-finger fold. Residue Cys390 participates in Zn(2+) binding. Lys392 participates in a covalent cross-link: Glycyl lysine isopeptide (Lys-Gly) (interchain with G-Cter in ubiquitin). Zn(2+)-binding residues include Cys393, His406, and Cys410.

As to quaternary structure, homodimer; disulfide-linked. Component of the I-kappa-B-kinase (IKK) core complex consisting of CHUK, IKBKB and IKBKG; probably four alpha/CHUK-beta/IKBKB dimers are associated with four gamma/IKBKG subunits. The IKK core complex seems to associate with regulatory or adapter proteins to form a IKK-signalosome holo-complex. The IKK complex associates with TERF2IP/RAP1, leading to promote IKK-mediated phosphorylation of RELA/p65. Part of a complex composed of NCOA2, NCOA3, CHUK/IKKA, IKBKB, IKBKG and CREBBP. Interacts with COPS3, CYLD, NALP2, TRPC4AP and PIDD1. Interacts with ATM; the complex is exported from the nucleus. Interacts with TRAF6. Interacts with IKBKE. Interacts with TANK; the interaction is enhanced by IKBKE and TBK1. Part of a ternary complex consisting of TANK, IKBKB and IKBKG. Interacts with ZFAND5. Interacts with RIPK2. Interacts with TNIP1 and TNFAIP3; TNIP1 facilitates the TNFAIP3-mediated de-ubiquitination of IKBKG. Interacts with TNFAIP3; the interaction is induced by TNF stimulation and by polyubiquitin. Binds (via UBAN region) polyubiquitin; binds both 'Lys-63'-linked and linear polyubiquitin, with higher affinity for linear ubiquitin. Interacts with NLRP10. Interacts with TANK; this interaction increases in response to DNA damage. Interacts with USP10; this interaction increases in response to DNA damage. Interacts with ZC3H12A; this interaction increases in response to DNA damage. Interacts with IFIT5; the interaction synergizes the recruitment of IKK to MAP3K7 and enhances IKK phosphorylation. Interacts with TRIM29; this interaction induces IKBKG/NEMO ubiquitination and proteolytic degradation. Interacts with TRIM13; this interaction leads to IKBKG/NEMO ubiquitination. Interacts with ARFIP2. Interacts with RIPK1. Interacts with (ubiquitinated) BCL10; interaction with polyubiquitinated BCL10 via both 'Lys-63'-linked and linear ubiquitin is required for TCR-induced NF-kappa-B activation. Interacts with MARCHF2; during the late stages of macrophage viral and bacterial infection; the interaction leads to ubiquitination and degradation of IKBKG/NEMO. Post-translationally, phosphorylation at Ser-68 attenuates aminoterminal homodimerization. Polyubiquitinated on Lys-278 via 'Lys-63'-linked ubiquitin; the ubiquitination is mediated downstream of NOD2 and RIPK2 and probably plays a role in signaling by facilitating interactions with ubiquitin domain-containing proteins and activates the NF-kappa-B pathway. Polyubiquitinated on Lys-278 and Lys-302 through 'Lys-63'-linked ubiquitin; the ubiquitination is mediated by BCL10, MALT1 and TRAF6 and probably plays a role in signaling by facilitating interactions with ubiquitin domain-containing proteins and activates the NF-kappa-B pathway. Monoubiquitinated on Lys-270 and Lys-302; promotes nuclear export. Polyubiquitinated through 'Lys-27' by TRIM23; involved in antiviral innate and inflammatory responses. Linear polyubiquitinated on Lys-111, Lys-143, Lys-226, Lys-246, Lys-270, Lys-278, Lys-285, Lys-295, Lys-302 and Lys-319; the head-to-tail polyubiquitination is mediated by the LUBAC complex and plays a key role in NF-kappa-B activation. Deubiquitinated by USP10 in a TANK-dependent and -independent manner, leading to the negative regulation of NF-kappa-B signaling upon DNA damage. Ubiquitinated at Lys-319 by MARCHF2 following bacterial and viral infection which leads to its degradation. Polyubiquitinated via 'Lys-29'-linked ubiquitin; leading to lysosomal degradation. In terms of processing, sumoylated on Lys-270 and Lys-302 with SUMO1; the modification results in phosphorylation of Ser-85 by ATM leading to a replacement of the sumoylation by mono-ubiquitination on these residues. Post-translationally, neddylated by TRIM40, resulting in stabilization of NFKBIA and down-regulation of NF-kappa-B activity.

The protein localises to the cytoplasm. Its subcellular location is the nucleus. Regulatory subunit of the IKK core complex which phosphorylates inhibitors of NF-kappa-B thus leading to the dissociation of the inhibitor/NF-kappa-B complex and ultimately the degradation of the inhibitor. Its binding to scaffolding polyubiquitin plays a key role in IKK activation by multiple signaling receptor pathways. Can recognize and bind both 'Lys-63'-linked and linear polyubiquitin upon cell stimulation, with a much highr affinity for linear polyubiquitin. Could be implicated in NF-kappa-B-mediated protection from cytokine toxicity. Essential for viral activation of IRF3. Involved in TLR3- and IFIH1-mediated antiviral innate response; this function requires 'Lys-27'-linked polyubiquitination. The polypeptide is NF-kappa-B essential modulator (Ikbkg) (Mus musculus (Mouse)).